The primary structure comprises 995 residues: KN motif and ankyrin repeat domain-containing protein 4 (995 aa).

Disordered stretches follow at residues Met-1 to Thr-29 and Thr-68 to Tyr-127. The segment covering Leu-101–Glu-124 has biased composition (polar residues). Residues Ser-343–Lys-404 adopt a coiled-coil conformation. Disordered stretches follow at residues Glu-443–Ser-467, Glu-503–Ala-558, Gln-617–Lys-642, Leu-663–Lys-705, and Pro-721–Ser-740. Positions Gly-511–Leu-523 are enriched in gly residues. Residues Ser-526–Gly-549 show a composition bias toward basic and acidic residues. Over residues Pro-625–Ser-640 the composition is skewed to low complexity. Residues Thr-680–Ser-693 show a composition bias toward acidic residues. A compositionally biased stretch (basic and acidic residues) spans Glu-694–Lys-705. ANK repeat units follow at residues Asn-823–His-853, Val-862–Ile-890, Gly-895–Leu-924, Asp-928–Leu-958, and Ala-962–Ser-992.

In terms of tissue distribution, strongly expressed in colon, liver, lung, skeletal muscle and kidney.

The protein resides in the cytoplasm. Functionally, may be involved in the control of cytoskeleton formation by regulating actin polymerization. This chain is KN motif and ankyrin repeat domain-containing protein 4 (KANK4), found in Homo sapiens (Human).